Here is a 189-residue protein sequence, read N- to C-terminus: Large ribosomal subunit protein uL5 (189 aa).

Belongs to the universal ribosomal protein uL5 family. As to quaternary structure, part of the 50S ribosomal subunit; part of the 5S rRNA/L5/L18/L25 subcomplex. Contacts the 5S rRNA and the P site tRNA. Forms a bridge to the 30S subunit in the 70S ribosome.

This is one of the proteins that bind and probably mediate the attachment of the 5S RNA into the large ribosomal subunit, where it forms part of the central protuberance. In the 70S ribosome it contacts protein S13 of the 30S subunit (bridge B1b), connecting the 2 subunits; this bridge is implicated in subunit movement. Contacts the P site tRNA; the 5S rRNA and some of its associated proteins might help stabilize positioning of ribosome-bound tRNAs. The polypeptide is Large ribosomal subunit protein uL5 (Kocuria rhizophila (strain ATCC 9341 / DSM 348 / NBRC 103217 / DC2201)).